Consider the following 156-residue polypeptide: Small ribosomal subunit protein uS7 (156 aa).

It belongs to the universal ribosomal protein uS7 family. As to quaternary structure, part of the 30S ribosomal subunit. Contacts proteins S9 and S11.

Functionally, one of the primary rRNA binding proteins, it binds directly to 16S rRNA where it nucleates assembly of the head domain of the 30S subunit. Is located at the subunit interface close to the decoding center, probably blocks exit of the E-site tRNA. This is Small ribosomal subunit protein uS7 from Mycobacterium tuberculosis (strain CDC 1551 / Oshkosh).